The chain runs to 141 residues: Transcriptional regulator MraZ (141 aa).

SpoVT-AbrB domains lie at 5–47 (TFNI…KPQD) and 76–119 (ANFV…DKKL).

Belongs to the MraZ family. In terms of assembly, homooctamer. Forms a ring.

Its subcellular location is the cytoplasm. It is found in the nucleoid. In Mycoplasma pneumoniae (strain ATCC 29342 / M129 / Subtype 1) (Mycoplasmoides pneumoniae), this protein is Transcriptional regulator MraZ.